Reading from the N-terminus, the 146-residue chain is Hemoglobin subunit beta (146 aa).

Position 1 is an N-acetylvaline (Val1). The region spanning 2-146 is the Globin domain; sequence HLTADEKAAV…VATALAHKYH (145 aa). At Thr12 the chain carries Phosphothreonine. Ser44 is subject to Phosphoserine. Lys59 bears the N6-acetyllysine mark. Residue His63 participates in heme b binding. Lys82 is subject to N6-acetyllysine. Heme b is bound at residue His92. Cys93 is modified (S-nitrosocysteine). At Lys144 the chain carries N6-acetyllysine.

Belongs to the globin family. Heterotetramer of two alpha chains and two beta chains. Red blood cells.

Involved in oxygen transport from the lung to the various peripheral tissues. The sequence is that of Hemoglobin subunit beta (HBB) from Cephalopachus bancanus (Western tarsier).